A 62-amino-acid chain; its full sequence is Large ribosomal subunit protein uL30 (62 aa).

Belongs to the universal ribosomal protein uL30 family. In terms of assembly, part of the 50S ribosomal subunit.

In Kosmotoga olearia (strain ATCC BAA-1733 / DSM 21960 / TBF 19.5.1), this protein is Large ribosomal subunit protein uL30.